We begin with the raw amino-acid sequence, 136 residues long: Succinate dehydrogenase assembly factor 3, mitochondrial (136 aa).

The transit peptide at 1–24 directs the protein to the mitochondrion; it reads MRASMVRRMAAAASSSASSSLRPA.

The protein belongs to the complex I LYR family. SDHAF3 subfamily. In terms of assembly, interacts with the iron-sulfur protein subunit within the SDH catalytic dimer.

It is found in the mitochondrion matrix. Its function is as follows. Plays an essential role in the assembly of succinate dehydrogenase (SDH), an enzyme complex (also referred to as respiratory complex II) that is a component of both the tricarboxylic acid (TCA) cycle and the mitochondrial electron transport chain, and which couples the oxidation of succinate to fumarate with the reduction of ubiquinone (coenzyme Q) to ubiquinol. Promotes maturation of the iron-sulfur protein subunit of the SDH catalytic dimer, protecting it from the deleterious effects of oxidants. May act together with SDHAF1. This chain is Succinate dehydrogenase assembly factor 3, mitochondrial, found in Pyricularia oryzae (strain 70-15 / ATCC MYA-4617 / FGSC 8958) (Rice blast fungus).